The primary structure comprises 123 residues: Galanin peptides (123 aa).

The N-terminal stretch at 1-19 (MPRGSVLLLASLLLAAALS) is a signal peptide. Residues 20–30 (ATLGLGSPVKE) constitute a propeptide that is removed on maturation. Basic and acidic residues predominate over residues 53–66 (SFQDKHGLAGKREL). Residues 53–79 (SFQDKHGLAGKRELEPEDEARPGSFDR) form a disordered region. Ala61 is subject to Alanine amide. Ser116 carries the post-translational modification Phosphoserine.

It belongs to the galanin family.

Its subcellular location is the secreted. In terms of biological role, endocrine hormone of the central and peripheral nervous systems that binds and activates the G protein-coupled receptors GALR1, GALR2, and GALR3. This small neuropeptide may regulate diverse physiologic functions including contraction of smooth muscle of the gastrointestinal and genitourinary tract, growth hormone and insulin release and adrenal secretion. This Bos taurus (Bovine) protein is Galanin peptides (GAL).